Here is a 436-residue protein sequence, read N- to C-terminus: tRNA-2-methylthio-N(6)-dimethylallyladenosine synthase (436 aa).

Residues 1–115 (MRVFFKTYGC…IAEVLQKAAR (115 aa)) form the MTTase N-terminal domain. [4Fe-4S] cluster contacts are provided by cysteine 10, cysteine 46, cysteine 80, cysteine 151, cysteine 155, and cysteine 158. The Radical SAM core domain occupies 137–368 (RFSKHHAWIT…LELQKQINRE (232 aa)). Positions 371–432 (MQYLGKVVEI…AGPLYGKLQK (62 aa)) constitute a TRAM domain.

It belongs to the methylthiotransferase family. MiaB subfamily. In terms of assembly, monomer. [4Fe-4S] cluster serves as cofactor.

It localises to the cytoplasm. It catalyses the reaction N(6)-dimethylallyladenosine(37) in tRNA + (sulfur carrier)-SH + AH2 + 2 S-adenosyl-L-methionine = 2-methylsulfanyl-N(6)-dimethylallyladenosine(37) in tRNA + (sulfur carrier)-H + 5'-deoxyadenosine + L-methionine + A + S-adenosyl-L-homocysteine + 2 H(+). In terms of biological role, catalyzes the methylthiolation of N6-(dimethylallyl)adenosine (i(6)A), leading to the formation of 2-methylthio-N6-(dimethylallyl)adenosine (ms(2)i(6)A) at position 37 in tRNAs that read codons beginning with uridine. This is tRNA-2-methylthio-N(6)-dimethylallyladenosine synthase from Pseudothermotoga lettingae (strain ATCC BAA-301 / DSM 14385 / NBRC 107922 / TMO) (Thermotoga lettingae).